The primary structure comprises 130 residues: MIGEWNNGTGRRKSSVARVFIKKGTGKITVNDKDIQAFFGRQTSIMICRQPLFLTNHVETFDIMINVHGGGESGQAGAVRHGITRALIDYDATLKPALSQAGFVTRDAREVERKKVGFRSARRRKQFSKR.

The protein belongs to the universal ribosomal protein uS9 family.

This is Small ribosomal subunit protein uS9 from Polaromonas naphthalenivorans (strain CJ2).